The following is a 1130-amino-acid chain: Roquin-1 (1130 aa).

Positions 14, 17, 33, 35, 38, 50, and 53 each coordinate Zn(2+). The RING-type; degenerate zinc finger occupies 14–54 (CPICTQTFDETIRKPISLGCGHTVCKMCLNKLHRKACPFDQ). The tract at residues 128–176 (VLSRPMQRKLVTLVHCQLVEEEGRIRAMRAARSLGERTVTELILQHQNP) is HEPN-N. The interval 177–326 (QQLSSNLWAA…MQSIIDKLQT (150 aa)) is ROQ. The segment at 327 to 399 (PASFAQSVQE…GLVDYIQNHS (73 aa)) is HEPN-C. The segment at 413–441 (KYKTYMCRDMKQRGGCPRGASCTFAHSQE) adopts a C3H1-type zinc-finger fold. A Phosphoserine modification is found at Ser-462. Disordered regions lie at residues 493–567 (LPNG…DLPP) and 722–750 (PHPA…PSLD). Positions 497–506 (IASSGSTVTQ) are enriched in polar residues. Residues Ser-531 and Ser-535 each carry the phosphoserine modification. Pro residues-rich tracts occupy residues 553–567 (NPHP…DLPP) and 732–746 (PRDP…PQPH). Residues Ser-861, Ser-1107, and Ser-1110 each carry the phosphoserine modification. Residues 1100–1130 (KTSSLNLSEDSEGGGDNNDSQRSGVVSNSAP) are disordered. A compositionally biased stretch (polar residues) spans 1116–1130 (NNDSQRSGVVSNSAP).

As to quaternary structure, interacts with DDX6 and EDC4. Interacts with CCR4-NOT deadenylase complex. Interacts with RC3H1; the interaction is RNA independent. Proteolytically cleaved after Arg-510 and Arg-579 by MALT1 in activated CD4(+) T cells; cleavage at Arg-510 and Arg-579 is critical for promoting RC3H1 degradation in response to T-cell receptor (TCR) stimulation, and hence is necessary for prolonging the stability of a set of mRNAs controlling Th17 cell differentiation. Widely expressed, with highest levels in lymph node and thymus and slightly lesser amounts in brain, lung, and spleen (at protein level). Very weak expression in heart, muscle, and kidney (at protein level). Expressed in CD4(+) helper T-cells (at protein level).

The protein resides in the cytoplasm. The protein localises to the P-body. It localises to the cytoplasmic granule. The catalysed reaction is S-ubiquitinyl-[E2 ubiquitin-conjugating enzyme]-L-cysteine + [acceptor protein]-L-lysine = [E2 ubiquitin-conjugating enzyme]-L-cysteine + N(6)-ubiquitinyl-[acceptor protein]-L-lysine.. It functions in the pathway protein modification; protein ubiquitination. Its function is as follows. Post-transcriptional repressor of mRNAs containing a conserved stem loop motif, called constitutive decay element (CDE), which is often located in the 3'-UTR, as in HMGXB3, ICOS, IER3, NFKBID, NFKBIZ, PPP1R10, TNF, TNFRSF4 and in many more mRNAs. Cleaves translationally inactive mRNAs harboring a stem-loop (SL), often located in their 3'-UTRs, during the early phase of inflammation in a helicase UPF1-independent manner. Binds to CDE and promotes mRNA deadenylation and degradation. This process does not involve miRNAs. In follicular helper T (Tfh) cells, represses of ICOS and TNFRSF4/Ox40 expression, thus preventing spontaneous Tfh cell differentiation, germinal center B-cell differentiation in the absence of immunization and autoimmunity. In resting or LPS-stimulated macrophages, controls inflammation by suppressing TNF expression. Also recognizes CDE in its own mRNA and in that of paralogous RC3H2, possibly leading to feedback loop regulation. Inhibits cooperatively with ZC3H12A the differentiation of helper T cells Th17 in lungs. They repress target mRNA encoding the Th17 cell-promoting factors IL6, ICOS, REL, IRF4, NFKBID and NFKBIZ. The cooperation requires RNA-binding by RC3H1 and the nuclease activity of ZC3H12A. Recognizes and binds mRNAs containing a hexaloop stem-loop motif, called alternative decay element (ADE). Together with ZC3H12A, destabilizes TNFRSF4/OX40 mRNA by binding to the conserved stem loop structure in its 3'UTR. Able to interact with double-stranded RNA. miRNA-binding protein that regulates microRNA homeostasis. Enhances DICER-mediated processing of pre-MIR146a but reduces mature MIR146a levels through an increase of 3' end uridylation. Both inhibits ICOS mRNA expression and they may act together to exert the suppression. Acts as a ubiquitin E3 ligase. Pairs with E2 enzymes UBE2A, UBE2B, UBE2D2, UBE2F, UBE2G1, UBE2G2 and UBE2L3 and produces polyubiquitin chains. Shows the strongest activity when paired with UBE2N:UBE2V1 or UBE2N:UBE2V2 E2 complexes and generate both short and long polyubiquitin chains. This chain is Roquin-1, found in Mus musculus (Mouse).